We begin with the raw amino-acid sequence, 225 residues long: MSKRYFVTGTDTEVGKTVASCALLQAAKAAGYRTAGYKPVASGSEKTPEGLRNSDALALQRNSSLQLDYATVNPYTFAEPTSPHIISAQEGRPIESLVMSAGLRALEQQADWVLVEGAGGWFTPLSDTFTFADWVTQEQLPVILVVGVKLGCINHAMLTAQVIQHAGLTLAGWVANDVTPPGKRHAEYMTTLTRMIPAPLLGEIPWLAENPENAATGKYINLALL.

2 residues coordinate Mg(2+): E13 and T17. ATP is bound at residue 13–18 (EVGKTV). Residue K38 is part of the active site. S42 contacts substrate. The Mg(2+) site is built by D55 and E116. Residues D55, 116–119 (EGAG), and 176–177 (ND) each bind ATP. Position 188 (Y188) interacts with substrate. ATP-binding positions include 205–207 (PWL) and E212.

The protein belongs to the dethiobiotin synthetase family. As to quaternary structure, homodimer. Mg(2+) serves as cofactor.

It localises to the cytoplasm. The catalysed reaction is (7R,8S)-7,8-diammoniononanoate + CO2 + ATP = (4R,5S)-dethiobiotin + ADP + phosphate + 3 H(+). It participates in cofactor biosynthesis; biotin biosynthesis; biotin from 7,8-diaminononanoate: step 1/2. In terms of biological role, catalyzes a mechanistically unusual reaction, the ATP-dependent insertion of CO2 between the N7 and N8 nitrogen atoms of 7,8-diaminopelargonic acid (DAPA, also called 7,8-diammoniononanoate) to form a ureido ring. Only CTP can partially replace ATP while diaminobiotin is only 37% as effective as 7,8-diaminopelargonic acid. In another study both CTP and GTP (but not ITP, TTP or UTP) can partially replace ATP. In Escherichia coli (strain K12), this protein is ATP-dependent dethiobiotin synthetase BioD 1.